A 429-amino-acid polypeptide reads, in one-letter code: Histidine--tRNA ligase (429 aa).

It belongs to the class-II aminoacyl-tRNA synthetase family. In terms of assembly, homodimer.

The protein resides in the cytoplasm. The enzyme catalyses tRNA(His) + L-histidine + ATP = L-histidyl-tRNA(His) + AMP + diphosphate + H(+). The protein is Histidine--tRNA ligase of Pseudomonas putida (strain W619).